We begin with the raw amino-acid sequence, 202 residues long: Superoxide dismutase [Mn] (202 aa).

Mn(2+) contacts are provided by histidine 27, histidine 82, aspartate 164, and histidine 168.

Belongs to the iron/manganese superoxide dismutase family. As to quaternary structure, homodimer. Requires Mn(2+) as cofactor.

The catalysed reaction is 2 superoxide + 2 H(+) = H2O2 + O2. In terms of biological role, destroys superoxide anion radicals which are normally produced within the cells and which are toxic to biological systems. The chain is Superoxide dismutase [Mn] (sodA) from Listeria innocua serovar 6a (strain ATCC BAA-680 / CLIP 11262).